A 180-amino-acid chain; its full sequence is MFPMVTGFMSYGQQTIRAARYIGQSFIITLSHTNRLPITIHYPYEKSITSERFRGRIHFEFDKCIACEVCVRVCPIDLPLVDWRFEKDIKRKQLLNYSIDFGVCIFCGNCVEYCPTNCLSMTEEYELSTYDRHELNYNQIALSRLPISIMGDYTIQTIRNSTQSKIDEEKSWNSRTITDY.

2 4Fe-4S ferredoxin-type domains span residues 55 to 84 (GRIHFEFDKCIACEVCVRVCPIDLPLVDWR) and 95 to 124 (LNYSIDFGVCIFCGNCVEYCPTNCLSMTEE). 8 residues coordinate [4Fe-4S] cluster: C64, C67, C70, C74, C104, C107, C110, and C114.

This sequence belongs to the complex I 23 kDa subunit family. As to quaternary structure, NDH is composed of at least 16 different subunits, 5 of which are encoded in the nucleus. Requires [4Fe-4S] cluster as cofactor.

It localises to the plastid. The protein localises to the chloroplast thylakoid membrane. It catalyses the reaction a plastoquinone + NADH + (n+1) H(+)(in) = a plastoquinol + NAD(+) + n H(+)(out). It carries out the reaction a plastoquinone + NADPH + (n+1) H(+)(in) = a plastoquinol + NADP(+) + n H(+)(out). Its function is as follows. NDH shuttles electrons from NAD(P)H:plastoquinone, via FMN and iron-sulfur (Fe-S) centers, to quinones in the photosynthetic chain and possibly in a chloroplast respiratory chain. The immediate electron acceptor for the enzyme in this species is believed to be plastoquinone. Couples the redox reaction to proton translocation, and thus conserves the redox energy in a proton gradient. This is NAD(P)H-quinone oxidoreductase subunit I, chloroplastic from Oryza nivara (Indian wild rice).